A 281-amino-acid polypeptide reads, in one-letter code: 18S rRNA (guanine-N(7))-methyltransferase (281 aa).

Positions leucine 212–threonine 231 are enriched in polar residues. Residues leucine 212–phenylalanine 281 form a disordered region. The span at arginine 242–lysine 256 shows a compositional bias: basic and acidic residues.

It belongs to the class I-like SAM-binding methyltransferase superfamily. BUD23/WBSCR22 family. In terms of assembly, heterodimer with TRMT112; this heterodimerization is necessary for the metabolic stability and activity of the catalytic subunit BUD23. Interacts with GRIP1. Post-translationally, may be ubiquitinated and targeted to degradation in response to pro-inflammatory cytokine signaling.

It is found in the nucleus. Its subcellular location is the nucleoplasm. The protein localises to the cytoplasm. It localises to the perinuclear region. The enzyme catalyses a guanosine in 18S rRNA + S-adenosyl-L-methionine = an N(7)-methylguanosine in 18S rRNA + S-adenosyl-L-homocysteine. In terms of biological role, S-adenosyl-L-methionine-dependent methyltransferase that specifically methylates the N(7) position of a guanine in 18S rRNA. Requires the methyltransferase adapter protein TRM112 for full rRNA methyltransferase activity. Involved in the pre-rRNA processing steps leading to small-subunit rRNA production independently of its RNA-modifying catalytic activity. Important for biogenesis end export of the 40S ribosomal subunit independent on its methyltransferase activity. Locus-specific steroid receptor coactivator. Potentiates transactivation by glucocorticoid (NR3C1), mineralocorticoid (NR3C2), androgen (AR) and progesterone (PGR) receptors. Required for the maintenance of open chromatin at the TSC22D3/GILZ locus to facilitate NR3C1 loading on the response elements. Required for maintenance of dimethylation on histone H3 'Lys-79' (H3K79me2), although direct histone methyltransferase activity is not observed in vitro. The protein is 18S rRNA (guanine-N(7))-methyltransferase of Mus musculus (Mouse).